The chain runs to 461 residues: ATP synthase subunit beta (461 aa).

151–158 contributes to the ATP binding site; sequence GGAGVGKT.

Belongs to the ATPase alpha/beta chains family. In terms of assembly, F-type ATPases have 2 components, CF(1) - the catalytic core - and CF(0) - the membrane proton channel. CF(1) has five subunits: alpha(3), beta(3), gamma(1), delta(1), epsilon(1). CF(0) has three main subunits: a(1), b(2) and c(9-12). The alpha and beta chains form an alternating ring which encloses part of the gamma chain. CF(1) is attached to CF(0) by a central stalk formed by the gamma and epsilon chains, while a peripheral stalk is formed by the delta and b chains.

It localises to the cell inner membrane. The catalysed reaction is ATP + H2O + 4 H(+)(in) = ADP + phosphate + 5 H(+)(out). Its function is as follows. Produces ATP from ADP in the presence of a proton gradient across the membrane. The catalytic sites are hosted primarily by the beta subunits. In Pseudoalteromonas translucida (strain TAC 125), this protein is ATP synthase subunit beta.